A 415-amino-acid chain; its full sequence is Protein CDC73 homolog (415 aa).

This sequence belongs to the CDC73 family. Component of the nuclear PAF1 complex (PAF1C), which consists of VIP2/ELF7/PAF1, VIP3/SKI8/WDR61, VIP4/LEO1, VIP5/RTF1, VIP6/ELF8/CTR9 and CDC73. Expressed in root tips, shoot apex, young leaves and flowers, especially in stamen filaments and carpels.

The protein resides in the nucleus. Functionally, component of the PAF1 complex (PAF1C) which is involved in histone modifications such as methylation on histone H3 'Lys-4' (H3K4me3). Involved in regulation of flowering time. Required for the expression of the flowering repressors FLC and MADS-box genes of the MAF family. Required for histone H3 trimethylation on 'Lys-4' (H3K4me3) at the FLC locus. Prevents trimethylation on 'Lys-27' (H3K27me3) at the same locus. The sequence is that of Protein CDC73 homolog from Arabidopsis thaliana (Mouse-ear cress).